Consider the following 474-residue polypeptide: Glutamate--tRNA ligase (474 aa).

The 'HIGH' region motif lies at 9 to 19; it reads PSPTGYLHVGG. A 'KMSKS' region motif is present at residues 240–244; that stretch reads KLSKR. Lys-243 provides a ligand contact to ATP.

Belongs to the class-I aminoacyl-tRNA synthetase family. Glutamate--tRNA ligase type 1 subfamily. Monomer.

Its subcellular location is the cytoplasm. The catalysed reaction is tRNA(Glu) + L-glutamate + ATP = L-glutamyl-tRNA(Glu) + AMP + diphosphate. Catalyzes the attachment of glutamate to tRNA(Glu) in a two-step reaction: glutamate is first activated by ATP to form Glu-AMP and then transferred to the acceptor end of tRNA(Glu). This is Glutamate--tRNA ligase from Vibrio vulnificus (strain CMCP6).